The following is a 363-amino-acid chain: Aminomethyltransferase (363 aa).

It belongs to the GcvT family. As to quaternary structure, the glycine cleavage system is composed of four proteins: P, T, L and H.

It catalyses the reaction N(6)-[(R)-S(8)-aminomethyldihydrolipoyl]-L-lysyl-[protein] + (6S)-5,6,7,8-tetrahydrofolate = N(6)-[(R)-dihydrolipoyl]-L-lysyl-[protein] + (6R)-5,10-methylene-5,6,7,8-tetrahydrofolate + NH4(+). Its function is as follows. The glycine cleavage system catalyzes the degradation of glycine. The sequence is that of Aminomethyltransferase from Staphylococcus aureus (strain N315).